Reading from the N-terminus, the 91-residue chain is MAIFKSISSISNSTSAMGSSNSTSNRNGFTSNDNSIAYFDGGCGGSGLGGWGGLSGWGGDGGFNGGCSGGSNTNIINLDIDIGRRRHRRCC.

A compositionally biased stretch (low complexity) spans 1 to 25 (MAIFKSISSISNSTSAMGSSNSTSN). The disordered stretch occupies residues 1-26 (MAIFKSISSISNSTSAMGSSNSTSNR).

This sequence belongs to the UPF0512 family.

This chain is UPF0512 protein E, found in Dictyostelium discoideum (Social amoeba).